Consider the following 216-residue polypeptide: Large ribosomal subunit protein uL3 (216 aa).

Residue glutamine 157 is modified to N5-methylglutamine.

The protein belongs to the universal ribosomal protein uL3 family. Part of the 50S ribosomal subunit. Forms a cluster with proteins L14 and L19. Methylated by PrmB.

Its function is as follows. One of the primary rRNA binding proteins, it binds directly near the 3'-end of the 23S rRNA, where it nucleates assembly of the 50S subunit. In Stenotrophomonas maltophilia (strain R551-3), this protein is Large ribosomal subunit protein uL3.